The chain runs to 78 residues: Beta sliding clamp (78 aa).

This sequence belongs to the beta sliding clamp family. In terms of assembly, forms a ring-shaped head-to-tail homodimer around DNA which binds and tethers DNA polymerases and other proteins to the DNA. The DNA replisome complex has a single clamp-loading complex (3 tau and 1 each of delta, delta', psi and chi subunits) which binds 3 Pol III cores (1 core on the leading strand and 2 on the lagging strand) each with a beta sliding clamp dimer. Additional proteins in the replisome are other copies of gamma, psi and chi, Ssb, DNA helicase and RNA primase.

The protein localises to the cytoplasm. In terms of biological role, confers DNA tethering and processivity to DNA polymerases and other proteins. Acts as a clamp, forming a ring around DNA (a reaction catalyzed by the clamp-loading complex) which diffuses in an ATP-independent manner freely and bidirectionally along dsDNA. Initially characterized for its ability to contact the catalytic subunit of DNA polymerase III (Pol III), a complex, multichain enzyme responsible for most of the replicative synthesis in bacteria; Pol III exhibits 3'-5' exonuclease proofreading activity. The beta chain is required for initiation of replication as well as for processivity of DNA replication. The protein is Beta sliding clamp (dnaN) of Serratia marcescens.